The primary structure comprises 110 residues: UPF0145 protein MTH_507 (110 aa).

It belongs to the UPF0145 family.

The sequence is that of UPF0145 protein MTH_507 from Methanothermobacter thermautotrophicus (strain ATCC 29096 / DSM 1053 / JCM 10044 / NBRC 100330 / Delta H) (Methanobacterium thermoautotrophicum).